Consider the following 702-residue polypeptide: DNA ligase (702 aa).

NAD(+) contacts are provided by residues 32–36 (DAEYD) and 81–82 (SL). The interval 104–125 (AESSAQKASLNPLVRDSDQKNR) is disordered. Glu139 is a binding site for NAD(+). Lys141 (N6-AMP-lysine intermediate) is an active-site residue. 4 residues coordinate NAD(+): Arg162, Glu199, Lys316, and Lys340. 4 residues coordinate Zn(2+): Cys434, Cys437, Cys452, and Cys458. The BRCT domain maps to 616–702 (KPNHPFRDKT…KALKPEGTKV (87 aa)).

It belongs to the NAD-dependent DNA ligase family. LigA subfamily. It depends on Mg(2+) as a cofactor. Mn(2+) is required as a cofactor.

It carries out the reaction NAD(+) + (deoxyribonucleotide)n-3'-hydroxyl + 5'-phospho-(deoxyribonucleotide)m = (deoxyribonucleotide)n+m + AMP + beta-nicotinamide D-nucleotide.. DNA ligase that catalyzes the formation of phosphodiester linkages between 5'-phosphoryl and 3'-hydroxyl groups in double-stranded DNA using NAD as a coenzyme and as the energy source for the reaction. It is essential for DNA replication and repair of damaged DNA. The sequence is that of DNA ligase from Hamiltonella defensa subsp. Acyrthosiphon pisum (strain 5AT).